The primary structure comprises 417 residues: Putative F-box protein At4g21240 (417 aa).

Positions 1–12 (MDRREEEEEETG) are enriched in acidic residues. The disordered stretch occupies residues 1–25 (MDRREEEEEETGYGEKGTRNQSKED). Over residues 16-25 (KGTRNQSKED) the composition is skewed to basic and acidic residues. Residues 30-76 (GKIFELIPLDMIPDILLRLPAKSAVRFRIVSKLWLSITTRPYFIRSF) form the F-box domain.

This chain is Putative F-box protein At4g21240, found in Arabidopsis thaliana (Mouse-ear cress).